The following is a 922-amino-acid chain: Autophagy-related protein 9B (922 aa).

2 disordered regions span residues 1–22 and 85–144; these read MVRR…DLGP and TPHN…MGPL. Residues 1-206 lie on the Cytoplasmic side of the membrane; the sequence is MVRRTGWGGS…KIYSYHQRNG (206 aa). Over residues 85–114 the composition is skewed to polar residues; the sequence is TPHNVLPTPTTPSTQAHPTMIHTSASPSWG. Positions 115–124 are enriched in low complexity; it reads SHSTPPLASA. Positions 150-153 match the Tyrosine-based sorting signal motif; the sequence is YERL. The helical transmembrane segment at 207–227 threads the bilayer; the sequence is FACILLEDVFQLGQFIFIVTF. The Lumenal segment spans residues 228–275; that stretch reads TTFLLRCVDYNVLFNNQPKNHTRRGPLHSKVTLSDAILPSAQCAEKIH. A helical membrane pass occupies residues 276–296; the sequence is DSPLLVFLLVLAAGFWLFQLL. Residues 297–437 lie on the Cytoplasmic side of the membrane; sequence RSVCNLFSYW…GVLANRWRRT (141 aa). The stretch at 438–458 is an intramembrane region; sequence VLLLAAVNLALSPLVLAWQVL. Over 459–523 the chain is Cytoplasmic; it reads HAFYSHVELL…RAAEPPAPLR (65 aa). A helical transmembrane segment spans residues 524–544; it reads ALLARQLVFFSGALFAALLVL. The Lumenal segment spans residues 545–550; that stretch reads TIYDED. The helical transmembrane segment at 551 to 571 threads the bilayer; it reads VLAVEHVLTTMTALGVTATVA. The Cytoplasmic segment spans residues 572–624; sequence RSFIPEEQCQGRSSQLLLQAALAHMHYLPEEPGATGARASSYWQMAQLLQYRA. The stretch at 625–645 is an intramembrane region; sequence VSLLEELLSPLLTPLFLLFWF. Residues 646–922 lie on the Cytoplasmic side of the membrane; the sequence is RPRALEIIDF…QKEPLTGPLH (277 aa). The tract at residues 848 to 922 is disordered; the sequence is ELWGEASASS…QKEPLTGPLH (75 aa). 2 stretches are compositionally biased toward low complexity: residues 854 to 870 and 877 to 889; these read SASS…QPGS and SWSS…ASSP. Over residues 890–899 the composition is skewed to polar residues; it reads RQQWGTQRAQ.

This sequence belongs to the ATG9 family. As to quaternary structure, homotrimer; forms a homotrimer with a central pore that forms a path between the two membrane leaflets. As to expression, expressed in heart, brain, and placenta and testis.

The protein localises to the preautophagosomal structure membrane. It carries out the reaction a 1,2-diacyl-sn-glycero-3-phosphocholine(in) = a 1,2-diacyl-sn-glycero-3-phosphocholine(out). The enzyme catalyses a 1,2-diacyl-sn-glycero-3-phospho-L-serine(in) = a 1,2-diacyl-sn-glycero-3-phospho-L-serine(out). It catalyses the reaction a 1,2-diacyl-sn-glycero-3-phosphoethanolamine(in) = a 1,2-diacyl-sn-glycero-3-phosphoethanolamine(out). Its function is as follows. Phospholipid scramblase involved in autophagy by mediating autophagosomal membrane expansion. Cycles between the preautophagosomal structure/phagophore assembly site (PAS) and the cytoplasmic vesicle pool and supplies membrane for the growing autophagosome. Lipid scramblase activity plays a key role in preautophagosomal structure/phagophore assembly by distributing the phospholipids that arrive through ATG2 (ATG2A or ATG2B) from the cytoplasmic to the luminal leaflet of the bilayer, thereby driving autophagosomal membrane expansion. In addition to autophagy, also plays a role in necrotic cell death. This chain is Autophagy-related protein 9B, found in Mus musculus (Mouse).